The chain runs to 46 residues: Large ribosomal subunit protein bL33B (46 aa).

Belongs to the bacterial ribosomal protein bL33 family.

This Mycoplasmopsis pulmonis (strain UAB CTIP) (Mycoplasma pulmonis) protein is Large ribosomal subunit protein bL33B (rpmG2).